The primary structure comprises 356 residues: Methionine import ATP-binding protein MetN (356 aa).

The 244-residue stretch at 7–250 (IKLDNIDVTF…PRESLTQDFI (244 aa)) folds into the ABC transporter domain. ATP is bound at residue 43-50 (GYSGAGKS).

This sequence belongs to the ABC transporter superfamily. Methionine importer (TC 3.A.1.24) family. The complex is composed of two ATP-binding proteins (MetN), two transmembrane proteins (MetI) and a solute-binding protein (MetQ).

The protein resides in the cell membrane. The catalysed reaction is L-methionine(out) + ATP + H2O = L-methionine(in) + ADP + phosphate + H(+). It catalyses the reaction D-methionine(out) + ATP + H2O = D-methionine(in) + ADP + phosphate + H(+). Its function is as follows. Part of the ABC transporter complex MetNIQ involved in methionine import. Responsible for energy coupling to the transport system. The protein is Methionine import ATP-binding protein MetN of Streptococcus agalactiae serotype Ia (strain ATCC 27591 / A909 / CDC SS700).